Reading from the N-terminus, the 107-residue chain is MENAFKLLYKTIEERKGSPLPESYTNYLFSKGEDKILKKIGEECAEVIIACKNNDKEEVVKEMVDVFYHCFVLLAEKNIALEDVMREVKERNGKLSRVGDRREIDTL.

Belongs to the PRA-PH family.

The protein resides in the cytoplasm. The catalysed reaction is 1-(5-phospho-beta-D-ribosyl)-ATP + H2O = 1-(5-phospho-beta-D-ribosyl)-5'-AMP + diphosphate + H(+). The protein operates within amino-acid biosynthesis; L-histidine biosynthesis; L-histidine from 5-phospho-alpha-D-ribose 1-diphosphate: step 2/9. The polypeptide is Phosphoribosyl-ATP pyrophosphatase (Bacillus cereus (strain ATCC 14579 / DSM 31 / CCUG 7414 / JCM 2152 / NBRC 15305 / NCIMB 9373 / NCTC 2599 / NRRL B-3711)).